Reading from the N-terminus, the 531-residue chain is MLFRSLLSTAVLAVSLCTDNASAAKHGRFGQKARDAMNIAKRSANAVKHSLKIPVEDYQFLNNKTKPYRVESLPDVHFDLGEMYSGLVPIEKGNVSRSLFFVFQPTIGEPVDEITIWLNGGPGCSSLEAFLQENGRFVWQPGTYQPVENPYSWVNLTNVLWVDQPVGTGFSLGVPTATSEEEIAEDFVKFFKNWQQIFGIKNFKIYVTGESYAGRYVPYISAAFLDQNDTEHFNLKGALAYDPCIGQFDYVQEEAPVVPFVQKNNALFNFNASFLAELESIHEQCGYKDFIDQYLVFPASGVQPPKAMNWSDPTCDVYDIVNNAVLDPNPCFNPYEINEMCPILWDVLGFPTEVDYLPAGASIYFDRADVKRAMHAPNITWSECSVESVFVGGDGGPEQEGDYSANPIEHVLPQVIEGTNRVLIGNGDYDMVILTNGTLLSIQNMTWNGKLGFDTAPSTPINIDIPDLMYNEVFIENGYDPQGGQGVMGIQHYERGLMWAETFQSGHMQPQFQPRVSYRHLEWLLGRRDTL.

The first 25 residues, 1–25 (MLFRSLLSTAVLAVSLCTDNASAAK), serve as a signal peptide directing secretion. The N-linked (GlcNAc...) asparagine glycan is linked to Asn20. Residues 26-52 (HGRFGQKARDAMNIAKRSANAVKHSLK) constitute a propeptide that is removed on maturation. Residues Asn63, Asn94, and Asn155 are each glycosylated (N-linked (GlcNAc...) asparagine). Ser211 is an active-site residue. Asn228, Asn271, Asn309, and Asn378 each carry an N-linked (GlcNAc...) asparagine glycan. Residue Asp430 is part of the active site. N-linked (GlcNAc...) asparagine glycosylation is found at Asn436 and Asn444. His507 is a catalytic residue.

The protein belongs to the peptidase S10 family. As to quaternary structure, monomer.

Inhibited by DFP, and Hg(Cl)2. Removes any amino acid from the C-terminus of a long peptide. Digests preferentially peptides containing a positively charged residue in P1' position, as well as arginine, lysine or phenylalanine in P1 position of ester substrate. Also catalyzes peptide synthesis. This Aspergillus niger protein is Serine-type carboxypeptidase F (pepF).